Reading from the N-terminus, the 146-residue chain is Snaclec coagulation factor IX/factor X-binding protein subunit B (146 aa).

A signal peptide spans Met1–Ala23. Positions Asp24 to Ala146 constitute a C-type lectin domain. Disulfide bonds link Cys25–Cys36, Cys53–Cys142, and Cys119–Cys134. 3 residues coordinate Ca(2+): Ser64, Gln66, and Glu70. Position 143 (Glu143) interacts with Ca(2+).

This sequence belongs to the snaclec family. In terms of assembly, heterodimer with subunit A of IX/X-bp or IX-bp; disulfide-linked. In terms of tissue distribution, expressed by the venom gland.

Its subcellular location is the secreted. Functionally, when linked to subunit A of IX/X-bp, anticoagulant protein which binds to the gamma-carboxyglutamic acid-domain regions of factors IX (F9) and factor X (10) in the presence of calcium with a 1 to 1 stoichiometry. In terms of biological role, when linked to subunit A of IX-bp, anticoagulant protein which binds to the gamma-carboxyglutamic acid-domain regions of factor IX (but not to factor X) in the presence of calcium with a 1 to 1 stoichiometry. In Protobothrops flavoviridis (Habu), this protein is Snaclec coagulation factor IX/factor X-binding protein subunit B.